The chain runs to 662 residues: Protein Aster-C (662 aa).

The interval 1 to 34 (MEGAPTVRQVMNEGDSSLATDLQEDVEENPSPTV) is disordered. The GRAM domain occupies 69 to 136 (EEYRRQFTHL…KNITFMTKEK (68 aa)). 2 disordered regions span residues 212–237 (SIED…EKLS) and 249–284 (RVSE…LPTL). The segment covering 265–276 (LGKEESQNEKQT) has biased composition (basic and acidic residues). Positions 326-497 (HGRLFINRIF…DLLIEESVLN (172 aa)) constitute a VASt domain. Residues 557–577 (LIVVMSIFVLLLVLLNVTLFL) form a helical membrane-spanning segment.

It is found in the endoplasmic reticulum membrane. The protein localises to the cell membrane. Cholesterol transporter that mediates non-vesicular transport of cholesterol from the plasma membrane (PM) to the endoplasmic reticulum (ER). Contains unique domains for binding cholesterol and the PM, thereby serving as a molecular bridge for the transfer of cholesterol from the PM to the ER. Plays a crucial role in cholesterol homeostasis and has the unique ability to localize to the PM based on the level of membrane cholesterol. In lipid-poor conditions localizes to the ER membrane and in response to excess cholesterol in the PM is recruited to the endoplasmic reticulum-plasma membrane contact sites (EPCS) which is mediated by the GRAM domain. At the EPCS, the sterol-binding VASt/ASTER domain binds to the cholesterol in the PM and facilitates its transfer from the PM to ER. This chain is Protein Aster-C (GRAMD1C), found in Homo sapiens (Human).